A 597-amino-acid polypeptide reads, in one-letter code: 2-succinyl-5-enolpyruvyl-6-hydroxy-3-cyclohexene-1-carboxylate synthase (597 aa).

This sequence belongs to the TPP enzyme family. MenD subfamily. As to quaternary structure, homodimer. The cofactor is Mg(2+). Requires Mn(2+) as cofactor. Thiamine diphosphate serves as cofactor.

It catalyses the reaction isochorismate + 2-oxoglutarate + H(+) = 5-enolpyruvoyl-6-hydroxy-2-succinyl-cyclohex-3-ene-1-carboxylate + CO2. It functions in the pathway quinol/quinone metabolism; 1,4-dihydroxy-2-naphthoate biosynthesis; 1,4-dihydroxy-2-naphthoate from chorismate: step 2/7. It participates in cofactor biosynthesis; phylloquinone biosynthesis. In terms of biological role, catalyzes the thiamine diphosphate-dependent decarboxylation of 2-oxoglutarate and the subsequent addition of the resulting succinic semialdehyde-thiamine pyrophosphate anion to isochorismate to yield 2-succinyl-5-enolpyruvyl-6-hydroxy-3-cyclohexene-1-carboxylate (SEPHCHC). The polypeptide is 2-succinyl-5-enolpyruvyl-6-hydroxy-3-cyclohexene-1-carboxylate synthase (Synechococcus sp. (strain JA-3-3Ab) (Cyanobacteria bacterium Yellowstone A-Prime)).